Consider the following 145-residue polypeptide: Major pollen allergen Ole e 1 (145 aa).

3 disulfides stabilise this stretch: Cys-19-Cys-90, Cys-22-Cys-131, and Cys-43-Cys-78. Asn-111 carries N-linked (GlcNAc...) (complex) asparagine; alternate glycosylation. Asn-111 carries an N-linked (GlcNAc...) (high mannose) asparagine; alternate glycan.

Belongs to the Ole e I family. N-glycosylated; contains high mannose (Man(7)-GlcNAc) and partially fucosylated complex glycans (GlcNAc-Man(3)-Xyl-GlcNAc). Complex glycans may contribute to the antigenicity. Exists both in a glycosylated and in a non-glycosylated form. Ole e 1 and Ole e 1.0103 are the only non-glycosylated isoallergens. Post-translationally, a second potential glycosylation site exists at position 50 in cv. Bella de Espana and cv. Hojiblanca. In terms of tissue distribution, expressed in tapetum and pollen grains. Not detected in petals, roots or leaves.

It localises to the endoplasmic reticulum. The protein resides in the secreted. May be involved in recognition between pollen-stigma and pollen tube-style cells. This Olea europaea (Common olive) protein is Major pollen allergen Ole e 1.